The sequence spans 82 residues: Cytochrome b559 subunit alpha (82 aa).

A helical transmembrane segment spans residues isoleucine 22–phenylalanine 36. Histidine 24 provides a ligand contact to heme.

This sequence belongs to the PsbE/PsbF family. In terms of assembly, heterodimer of an alpha subunit and a beta subunit. PSII is composed of 1 copy each of membrane proteins PsbA, PsbB, PsbC, PsbD, PsbE, PsbF, PsbH, PsbI, PsbJ, PsbK, PsbL, PsbM, PsbT, PsbX, PsbY, Psb30/Ycf12, peripheral proteins PsbO, CyanoQ (PsbQ), PsbU, PsbV and a large number of cofactors. It forms dimeric complexes. Heme b is required as a cofactor.

Its subcellular location is the cellular thylakoid membrane. Its function is as follows. This b-type cytochrome is tightly associated with the reaction center of photosystem II (PSII). PSII is a light-driven water:plastoquinone oxidoreductase that uses light energy to abstract electrons from H(2)O, generating O(2) and a proton gradient subsequently used for ATP formation. It consists of a core antenna complex that captures photons, and an electron transfer chain that converts photonic excitation into a charge separation. The polypeptide is Cytochrome b559 subunit alpha (Prochlorococcus marinus (strain MIT 9515)).